Here is a 222-residue protein sequence, read N- to C-terminus: Charged multivesicular body protein 4a (222 aa).

2 disordered regions span residues 1–21 (MSGL…TPEE) and 177–222 (LLHV…EWVS). The tract at residues 1-116 (MSGLGRLFGR…ELAAQGLKKA (116 aa)) is interaction with phosphoinosides. Positions 1–150 (MSGLGRLFGR…QISDAISRPV (150 aa)) are intramolecular interaction with C-terminus. 2 coiled-coil regions span residues 20–105 (EEAI…VLRT) and 155–180 (DVDE…LLHV). Residues 151-222 (GFGDDVDEDE…ELKQLAEWVS (72 aa)) form an intramolecular interaction with N-terminus region. At Ser-196 the chain carries Phosphoserine.

The protein belongs to the SNF7 family. Probable core component of the endosomal sorting required for transport complex III (ESCRT-III). ESCRT-III components are thought to multimerize to form a flat lattice on the perimeter membrane of the endosome. Several assembly forms of ESCRT-III may exist that interact and act sequentially. Self-associates; overexpression leads to the assembly of filaments that curve and associate to create circular rings. Interacts with CHMP2A. Interacts with CHMP3; the interaction requires the release of CHMP4A autoinhibition. Interacts with CHMP4B. Interacts with CHMP4C. Interacts with CHMP6. Interacts with VPS4A. Interacts with PDCD6IP; the interaction is direct.

Its subcellular location is the cytoplasmic vesicle membrane. It localises to the late endosome membrane. In terms of biological role, probable core component of the endosomal sorting required for transport complex III (ESCRT-III) which is involved in multivesicular bodies (MVBs) formation and sorting of endosomal cargo proteins into MVBs. MVBs contain intraluminal vesicles (ILVs) that are generated by invagination and scission from the limiting membrane of the endosome and mostly are delivered to lysosomes enabling degradation of membrane proteins, such as stimulated growth factor receptors, lysosomal enzymes and lipids. The MVB pathway appears to require the sequential function of ESCRT-O, -I,-II and -III complexes. ESCRT-III proteins mostly dissociate from the invaginating membrane before the ILV is released. The ESCRT machinery also functions in topologically equivalent membrane fission events, such as the terminal stages of cytokinesis and the budding of enveloped viruses (lentiviruses). ESCRT-III proteins are believed to mediate the necessary vesicle extrusion and/or membrane fission activities, possibly in conjunction with the AAA ATPase VPS4. When overexpressed, membrane-assembled circular arrays of CHMP4A filaments can promote or stabilize negative curvature and outward budding. CHMP4A/B/C are required for the exosomal release of SDCBP, CD63 and syndecan. The protein is Charged multivesicular body protein 4a (CHMP4A) of Bos taurus (Bovine).